The following is a 304-amino-acid chain: Dihydroorotate dehydrogenase B (NAD(+)), catalytic subunit (304 aa).

FMN-binding positions include Ser-22 and 46–47; that span reads KG. Substrate is bound by residues Lys-46 and 70 to 74; that span reads NAIGL. Residues Asn-100 and Asn-128 each contribute to the FMN site. Asn-128 provides a ligand contact to substrate. Cys-131 functions as the Nucleophile in the catalytic mechanism. The FMN site is built by Lys-166 and Ile-192. Residue 193–194 coordinates substrate; the sequence is NT. FMN contacts are provided by residues Gly-218, 244 to 245, and 266 to 267; these read GG and GT.

This sequence belongs to the dihydroorotate dehydrogenase family. Type 1 subfamily. Heterotetramer of 2 PyrK and 2 PyrD type B subunits. FMN is required as a cofactor.

The protein localises to the cytoplasm. It catalyses the reaction (S)-dihydroorotate + NAD(+) = orotate + NADH + H(+). The protein operates within pyrimidine metabolism; UMP biosynthesis via de novo pathway; orotate from (S)-dihydroorotate (NAD(+) route): step 1/1. In terms of biological role, catalyzes the conversion of dihydroorotate to orotate with NAD(+) as electron acceptor. The protein is Dihydroorotate dehydrogenase B (NAD(+)), catalytic subunit (pyrD) of Pelobacter propionicus (strain DSM 2379 / NBRC 103807 / OttBd1).